A 208-amino-acid polypeptide reads, in one-letter code: UPF0637 protein BCB4264_A4063 (208 aa).

Belongs to the UPF0637 family.

This is UPF0637 protein BCB4264_A4063 from Bacillus cereus (strain B4264).